The primary structure comprises 189 residues: uncharacterized protein (189 aa).

Residues 1–174 enclose the Macro domain; the sequence is MKCWTLGDRV…GMEKGVREAL (174 aa).

This is an uncharacterized protein from Aeropyrum pernix (strain ATCC 700893 / DSM 11879 / JCM 9820 / NBRC 100138 / K1).